Consider the following 343-residue polypeptide: Phosphoribosylformylglycinamidine cyclo-ligase (343 aa).

Belongs to the AIR synthase family.

The protein resides in the cytoplasm. It catalyses the reaction 2-formamido-N(1)-(5-O-phospho-beta-D-ribosyl)acetamidine + ATP = 5-amino-1-(5-phospho-beta-D-ribosyl)imidazole + ADP + phosphate + H(+). The protein operates within purine metabolism; IMP biosynthesis via de novo pathway; 5-amino-1-(5-phospho-D-ribosyl)imidazole from N(2)-formyl-N(1)-(5-phospho-D-ribosyl)glycinamide: step 2/2. The chain is Phosphoribosylformylglycinamidine cyclo-ligase from Enterococcus faecalis (strain ATCC 700802 / V583).